We begin with the raw amino-acid sequence, 106 residues long: Transcription initiation factor IIA subunit 2 (106 aa).

The protein belongs to the TFIIA subunit 2 family. TFIIA is a heterodimer of the large unprocessed subunit 1 and a small subunit gamma. It was originally believed to be a heterotrimer of an alpha, a beta and a gamma subunit.

The protein resides in the nucleus. In terms of biological role, TFIIA is a component of the transcription machinery of RNA polymerase II and plays an important role in transcriptional activation. TFIIA in a complex with TBP mediates transcriptional activity. Protein involved in the resistance to X.oryzae. In Oryza sativa subsp. indica (Rice), this protein is Transcription initiation factor IIA subunit 2 (TFIIAy).